The primary structure comprises 589 residues: (E)-beta-ocimene synthase, chloroplastic (589 aa).

A chloroplast-targeting transit peptide spans 1 to 25 (MAAHNLCFNSAFVCNVHHQKTQHFP). Residues R302, D339, D343, R480, and N483 each coordinate (2E,6E)-farnesyl diphosphate. 2 residues coordinate Mg(2+): D339 and D343. The DDXXD motif motif lies at 339–343 (DDIYD). The Mg(2+) site is built by N483, T487, and E491.

The protein belongs to the terpene synthase family. Tpsb subfamily. Requires Mg(2+) as cofactor. Mn(2+) serves as cofactor. As to expression, expressed exclusively in flowers.

It localises to the plastid. Its subcellular location is the chloroplast. The enzyme catalyses (2E,6E)-farnesyl diphosphate = (3E,6E)-alpha-farnesene + diphosphate. Its pathway is secondary metabolite biosynthesis; terpenoid biosynthesis. Its function is as follows. Predominantly involved in monoterpene (C10) biosynthesis. Using GPP as substrate, the major product is (E)-beta-ocimene with minor amounts of (Z)-beta-ocimene and myrcene. Using FPP as substrate, could also be able to synthesize in vitro sesquiterpenes (C15) with (E,E)-alpha-farnesene as the major product and with (Z,E)-alpha-farnesene and (E,E)-beta-farnesene as minor products. This is (E)-beta-ocimene synthase, chloroplastic (TPS02) from Arabidopsis thaliana (Mouse-ear cress).